A 277-amino-acid chain; its full sequence is MAVVTMRELLDAGVHFGHQTRRWNPKMKRFIFTDRNGIYIIDLQQTLTYIDEAYEFVKETVAHGGNILYVGTKKQAQEAVANEAERVGMPYVNHRWLGGMLTNFQTVAKRLHRLKELQAMDAAEDGYKGRTKKEVLMLTRERNKLERVLGGIADMTKTPSALWIVDTNKEHIAVSEAQKLNIPVVAILDTNCDPDVVDYPIPGNDDAIRSANLLTSIISSAVEAGRQARAERQEAAAKEAAGDADKAPAEAERTEAPAEEAPAEAQSEAKAEGNTEA.

Composition is skewed to basic and acidic residues over residues Q227–A256 and S267–A277. The interval Q227 to A277 is disordered.

The protein belongs to the universal ribosomal protein uS2 family.

The chain is Small ribosomal subunit protein uS2 from Corynebacterium jeikeium (strain K411).